We begin with the raw amino-acid sequence, 130 residues long: Fluoride-specific ion channel FluC (130 aa).

4 helical membrane passes run 3–23 (FIFL…YFVG), 39–59 (GTFS…HLAV), 67–87 (FGIF…SYGL), and 102–122 (VSYA…GWFL). The Na(+) site is built by Gly77 and Thr80.

Belongs to the fluoride channel Fluc/FEX (TC 1.A.43) family.

It localises to the cell inner membrane. It catalyses the reaction fluoride(in) = fluoride(out). With respect to regulation, na(+) is not transported, but it plays an essential structural role and its presence is essential for fluoride channel function. Functionally, fluoride-specific ion channel. Important for reducing fluoride concentration in the cell, thus reducing its toxicity. The sequence is that of Fluoride-specific ion channel FluC from Helicobacter pylori (strain Shi470).